Consider the following 149-residue polypeptide: MRLNDPKPKTGSQHRRRRVGRGIAAGQGASCGFGMRGQKSRSGRPTRPGFEGGQNPLYRRVPKLKHFTLINQKQYTTINVGKLNELKAKSDVTLESLMAEGIITSNDGPLKVLGDGELTVALNVQAAAATQSAIAKVEGAGGSFQSTES.

Residues 1–57 (MRLNDPKPKTGSQHRRRRVGRGIAAGQGASCGFGMRGQKSRSGRPTRPGFEGGQNPL) form a disordered region. Over residues 23 to 35 (IAAGQGASCGFGM) the composition is skewed to gly residues.

The protein belongs to the universal ribosomal protein uL15 family. In terms of assembly, part of the 50S ribosomal subunit.

Binds to the 23S rRNA. The protein is Large ribosomal subunit protein uL15 of Acaryochloris marina (strain MBIC 11017).